The following is a 355-amino-acid chain: Anthranilate phosphoribosyltransferase (355 aa).

5-phospho-alpha-D-ribose 1-diphosphate contacts are provided by residues G102, 105–106 (GD), S110, 112–115 (NIST), 130–138 (KHGNRSVSS), and S142. Anthranilate is bound at residue G102. S114 lines the Mg(2+) pocket. N133 serves as a coordination point for anthranilate. R188 contacts anthranilate. The Mg(2+) site is built by D246 and E247.

The protein belongs to the anthranilate phosphoribosyltransferase family. Homodimer. Mg(2+) serves as cofactor.

The enzyme catalyses N-(5-phospho-beta-D-ribosyl)anthranilate + diphosphate = 5-phospho-alpha-D-ribose 1-diphosphate + anthranilate. It participates in amino-acid biosynthesis; L-tryptophan biosynthesis; L-tryptophan from chorismate: step 2/5. Its function is as follows. Catalyzes the transfer of the phosphoribosyl group of 5-phosphorylribose-1-pyrophosphate (PRPP) to anthranilate to yield N-(5'-phosphoribosyl)-anthranilate (PRA). This chain is Anthranilate phosphoribosyltransferase, found in Pectobacterium atrosepticum (strain SCRI 1043 / ATCC BAA-672) (Erwinia carotovora subsp. atroseptica).